A 453-amino-acid polypeptide reads, in one-letter code: Ribulose bisphosphate carboxylase large chain (453 aa).

The propeptide occupies 1–2 (MS). Pro-3 bears the N-acetylproline mark. The residue at position 14 (Lys-14) is an N6,N6,N6-trimethyllysine. Residues Asn-123 and Thr-173 each contribute to the substrate site. Lys-175 serves as the catalytic Proton acceptor. Lys-177 contacts substrate. Residues Lys-201, Asp-203, and Glu-204 each contribute to the Mg(2+) site. At Lys-201 the chain carries N6-carboxylysine. His-294 acts as the Proton acceptor in catalysis. Residues Arg-295, His-327, and Ser-379 each coordinate substrate.

Belongs to the RuBisCO large chain family. Type I subfamily. In terms of assembly, heterohexadecamer of 8 large chains and 8 small chains; disulfide-linked. The disulfide link is formed within the large subunit homodimers. Mg(2+) is required as a cofactor. The disulfide bond which can form in the large chain dimeric partners within the hexadecamer appears to be associated with oxidative stress and protein turnover.

It is found in the plastid. It localises to the chloroplast. The enzyme catalyses 2 (2R)-3-phosphoglycerate + 2 H(+) = D-ribulose 1,5-bisphosphate + CO2 + H2O. The catalysed reaction is D-ribulose 1,5-bisphosphate + O2 = 2-phosphoglycolate + (2R)-3-phosphoglycerate + 2 H(+). In terms of biological role, ruBisCO catalyzes two reactions: the carboxylation of D-ribulose 1,5-bisphosphate, the primary event in carbon dioxide fixation, as well as the oxidative fragmentation of the pentose substrate in the photorespiration process. Both reactions occur simultaneously and in competition at the same active site. The polypeptide is Ribulose bisphosphate carboxylase large chain (Galium palustre (Common marsh bedstraw)).